The sequence spans 61 residues: Large ribosomal subunit protein uL30 (61 aa).

This sequence belongs to the universal ribosomal protein uL30 family. As to quaternary structure, part of the 50S ribosomal subunit.

This is Large ribosomal subunit protein uL30 from Chlorobium phaeobacteroides (strain BS1).